The sequence spans 256 residues: N-acetylglucosaminyldiphosphoundecaprenol N-acetyl-beta-D-mannosaminyltransferase (256 aa).

The protein belongs to the glycosyltransferase 26 family. TagA/TarA subfamily.

The enzyme catalyses UDP-N-acetyl-alpha-D-mannosamine + N-acetyl-alpha-D-glucosaminyl-di-trans,octa-cis-undecaprenyl diphosphate = N-acetyl-beta-D-mannosaminyl-(1-&gt;4)-N-acetyl-alpha-D-glucosaminyl di-trans,octa-cis-undecaprenyl diphosphate + UDP + H(+). The protein operates within cell wall biogenesis; poly(glycerol phosphate) teichoic acid biosynthesis. Functionally, catalyzes the conversion of GlcNAc-PP-undecaprenol into ManNAc-GlcNAc-PP-undecaprenol, the first committed lipid intermediate in the de novo synthesis of teichoic acid. The protein is N-acetylglucosaminyldiphosphoundecaprenol N-acetyl-beta-D-mannosaminyltransferase of Bacillus subtilis (strain 168).